We begin with the raw amino-acid sequence, 274 residues long: 1D-myo-inositol 2-acetamido-2-deoxy-alpha-D-glucopyranoside deacetylase 2 (274 aa).

The Zn(2+) site is built by His-6, Asp-9, and His-140.

This sequence belongs to the MshB deacetylase family. It depends on Zn(2+) as a cofactor.

It catalyses the reaction 1D-myo-inositol 2-acetamido-2-deoxy-alpha-D-glucopyranoside + H2O = 1D-myo-inositol 2-amino-2-deoxy-alpha-D-glucopyranoside + acetate. Functionally, catalyzes the deacetylation of 1D-myo-inositol 2-acetamido-2-deoxy-alpha-D-glucopyranoside (GlcNAc-Ins) in the mycothiol biosynthesis pathway. In Saccharopolyspora erythraea (strain ATCC 11635 / DSM 40517 / JCM 4748 / NBRC 13426 / NCIMB 8594 / NRRL 2338), this protein is 1D-myo-inositol 2-acetamido-2-deoxy-alpha-D-glucopyranoside deacetylase 2.